A 502-amino-acid polypeptide reads, in one-letter code: Lysine--tRNA ligase (502 aa).

Positions 398 and 405 each coordinate Mg(2+).

The protein belongs to the class-II aminoacyl-tRNA synthetase family. In terms of assembly, homodimer. It depends on Mg(2+) as a cofactor.

The protein resides in the cytoplasm. The enzyme catalyses tRNA(Lys) + L-lysine + ATP = L-lysyl-tRNA(Lys) + AMP + diphosphate. The sequence is that of Lysine--tRNA ligase from Thermotoga sp. (strain RQ2).